A 440-amino-acid chain; its full sequence is tRNA-2-methylthio-N(6)-dimethylallyladenosine synthase (440 aa).

The MTTase N-terminal domain maps to 4–120; sequence NYVYIETFGC…LNDMVLAAER (117 aa). [4Fe-4S] cluster is bound by residues C13, C49, C83, C158, C162, and C165. The Radical SAM core domain occupies 144 to 374; the sequence is GTARISSFVT…QALQKRTTME (231 aa). Positions 377–439 constitute a TRAM domain; that stretch reads DVLLGTRQTV…QNSLLGELLP (63 aa).

This sequence belongs to the methylthiotransferase family. MiaB subfamily. In terms of assembly, monomer. The cofactor is [4Fe-4S] cluster.

It is found in the cytoplasm. The catalysed reaction is N(6)-dimethylallyladenosine(37) in tRNA + (sulfur carrier)-SH + AH2 + 2 S-adenosyl-L-methionine = 2-methylsulfanyl-N(6)-dimethylallyladenosine(37) in tRNA + (sulfur carrier)-H + 5'-deoxyadenosine + L-methionine + A + S-adenosyl-L-homocysteine + 2 H(+). Functionally, catalyzes the methylthiolation of N6-(dimethylallyl)adenosine (i(6)A), leading to the formation of 2-methylthio-N6-(dimethylallyl)adenosine (ms(2)i(6)A) at position 37 in tRNAs that read codons beginning with uridine. The sequence is that of tRNA-2-methylthio-N(6)-dimethylallyladenosine synthase from Pelobacter propionicus (strain DSM 2379 / NBRC 103807 / OttBd1).